The sequence spans 196 residues: Auxin-induced protein 22B (196 aa).

An EAR-like (transcriptional repression) motif is present at residues 18 to 22; it reads LRLGL. The tract at residues 44 to 74 is disordered; that stretch reads RQVRETSQDSVSISKASHHQQHVETVSAPPP. A PB1 domain is found at 99 to 186; that stretch reads GIFVKVSMDG…SCKRLRIMKG (88 aa).

This sequence belongs to the Aux/IAA family. As to quaternary structure, homodimers and heterodimers.

It localises to the nucleus. Its function is as follows. Aux/IAA proteins are short-lived transcriptional factors that function as repressors of early auxin response genes at low auxin concentrations. Repression is thought to result from the interaction with auxin response factors (ARFs), proteins that bind to the auxin-responsive promoter element (AuxRE). Formation of heterodimers with ARF proteins may alter their ability to modulate early auxin response genes expression. The protein is Auxin-induced protein 22B (AUX22B) of Vigna radiata var. radiata (Mung bean).